The following is a 148-amino-acid chain: Arginine repressor (148 aa).

The protein belongs to the ArgR family.

The protein localises to the cytoplasm. It functions in the pathway amino-acid biosynthesis; L-arginine biosynthesis [regulation]. Regulates arginine biosynthesis genes. This Pelodictyon phaeoclathratiforme (strain DSM 5477 / BU-1) protein is Arginine repressor.